The following is a 771-amino-acid chain: Receptor like protein 22 (771 aa).

An N-terminal signal peptide occupies residues 1 to 20; sequence MSNLRLRLLSLVSILYCIAA. The Extracellular segment spans residues 21–729; the sequence is LRCRPDQTET…EEEEILEWRA (709 aa). N-linked (GlcNAc...) asparagine glycans are attached at residues Asn-46, Asn-58, Asn-80, Asn-93, Asn-134, and Asn-158. 12 LRR repeats span residues 86–110, 112–135, 136–159, 160–183, 185–206, 207–230, 232–254, 255–281, 283–303, 304–327, 329–350, and 353–377; these read LSHL…AFGQ, NNLE…IRNL, TKLT…VQNL, TKLL…FFTM, FLSY…SNSS, SKLE…VLRL, NLRY…IFSP, LQSL…DFPK, MEIL…LKSL, KKLW…IWSL, LLVS…LDHV, and NSSV…PVSI. N-linked (GlcNAc...) asparagine glycosylation is present at Asn-204. Asn-242 is a glycosylation site (N-linked (GlcNAc...) asparagine). Asn-292 carries N-linked (GlcNAc...) asparagine glycosylation. 10 N-linked (GlcNAc...) asparagine glycosylation sites follow: Asn-337, Asn-344, Asn-353, Asn-379, Asn-384, Asn-397, Asn-410, Asn-421, Asn-466, and Asn-481. One copy of the LRR 13; degenerate repeat lies at 378–397; sequence INLSAWNNSFTGDIPLSVCN. 10 LRR repeats span residues 398-419, 420-443, 445-467, 469-491, 492-516, 519-543, 588-612, 613-636, 637-660, and 662-685; these read RTSL…PPCM, GNFT…FYSG, LTQT…LLNC, FIRF…LKAL, PNLK…DQSS, FPKL…YFAN, LTFY…IGLL, KTLI…FANV, TELE…LGRL, and YLAY…QIIG. A glycan (N-linked (GlcNAc...) asparagine) is linked at Asn-543. N-linked (GlcNAc...) asparagine glycans are attached at residues Asn-619, Asn-622, and Asn-635. The helical transmembrane segment at 730 to 750 threads the bilayer; it reads AAIGYGPGVLFGLAIGHVVAL. Residues 751–771 are Cytoplasmic-facing; it reads YKPGWFIKNNGQNRLRGIRHP.

This sequence belongs to the RLP family.

It is found in the cell membrane. In Arabidopsis thaliana (Mouse-ear cress), this protein is Receptor like protein 22.